We begin with the raw amino-acid sequence, 271 residues long: MISIQNLTFYYGCNPILKDLNLTIQNNSWVSIVGHNGSGKSTLAKILVGLLSCTKGQILIDNIVLNEKNLPLLRPKIGMVFQNPDYQFTGLTVREDIAFGLENHNVCREEIIAKVWQYAKMVKIDDLLDTNVNQLSGGQKQRVAIASILAMEPEIIIFDEVTSFLDPQGALEVQKIIQTIKNKILITITHDLEFAAKSDEIIVLDQGKLITQTPPQNLFQDPLFLQQYKLNPPLSLELYYEILKDSTTKNIKNNQMLENLKDILWQYNLKK.

Residues 2–231 (ISIQNLTFYY…PLFLQQYKLN (230 aa)) form the ABC transporter domain. 34–41 (GHNGSGKS) serves as a coordination point for ATP.

Belongs to the ABC transporter superfamily. Energy-coupling factor EcfA family. In terms of assembly, forms a stable energy-coupling factor (ECF) transporter complex composed of 2 membrane-embedded substrate-binding proteins (S component), 2 ATP-binding proteins (A component) and 2 transmembrane proteins (T component).

It localises to the cell membrane. ATP-binding (A) component of a common energy-coupling factor (ECF) ABC-transporter complex. Unlike classic ABC transporters this ECF transporter provides the energy necessary to transport a number of different substrates. This Onion yellows phytoplasma (strain OY-M) protein is Energy-coupling factor transporter ATP-binding protein EcfA.